Consider the following 101-residue polypeptide: Defensin-like protein 222 (101 aa).

The signal sequence occupies residues 1 to 21; it reads MRTIVLFSTLMILVLSCMSNA. 3 disulfide bridges follow: cysteine 68-cysteine 85, cysteine 71-cysteine 90, and cysteine 75-cysteine 92.

This sequence belongs to the DEFL family.

Its subcellular location is the secreted. This chain is Defensin-like protein 222, found in Arabidopsis thaliana (Mouse-ear cress).